Reading from the N-terminus, the 481-residue chain is MVQHRFLLVTFPAQGHINPSLQFAKRLINTTGAHVTYVTSLSAHRRIGNGSIPDGLTYAPFSDGYDDGFKPGDNVDDYMSELRRRGVQAITDLVVASANEGHPYTCLVYSLLLPWSAGMAHELHLPSVLLWIQPATVFDIYYYYFNGYKDLIRDNTSSGTNNVLPCSIELPGLPLSFTSRDLPSFMVDTNPYNFALPLFQEQMELLERETNPTILVNTFDALEPEALKAIDKYNLIGVGPLIPSAFLDGKDPSDKSFGGDLFQKSKDSSYLEWLNSKPEGSVIYVSFGSISVLGKAQMEEIAKGLLDCGLPFLWVIRDKVGKKGDDNEAKKEEEMLRCREELEELGMIVPWCSQVEVLSSPSLGCFVTHCGWNSSLESLVSGVPVVAFPQWTDQGTNAKLIEDYWKTGVRVTPNEEGIVTGEELKRCLDLVLGSGEIGEDVRRNAKKWKDLAREAVSEGDSSDKNLRAFLDQIKVLKDARH.

The active-site Proton acceptor is histidine 16. Histidine 16 lines the an anthocyanidin pocket. UDP-alpha-D-glucose-binding residues include glutamine 354, histidine 369, tryptophan 372, asparagine 373, serine 374, glutamate 377, aspartate 393, and glutamine 394.

It belongs to the UDP-glycosyltransferase family. In terms of tissue distribution, highly expressed in young leaves, at intermediate level in mature leaves and at low levels in flowers and fruits.

It carries out the reaction phloretin + UDP-alpha-D-glucose = trilobatin + UDP + H(+). It catalyses the reaction (2S)-naringenin + UDP-alpha-D-glucose = (2S)-naringenin 7-O-beta-D-glucoside + UDP + H(+). Functionally, glycosyltransferase that possesses phloretin 4'-O-glycosyltransferase activity. Converts phloretin to trilobatin (phloretin 4'-O-glucoside), a potential antioxidant. Can convert with low efficiency phlorizin and trilobatin to their corresponding di-O-glucosides. Can convert with low efficiency naringenin to naringenin-7-O-glucoside. Can convert with low efficiency quercetin to quercetin-7-O-glucoside. The sequence is that of Phloretin 4'-O-glucosyltransferase from Malus domestica (Apple).